The following is a 375-amino-acid chain: 23S rRNA (uracil(747)-C(5))-methyltransferase RlmC (375 aa).

[4Fe-4S] cluster is bound by residues Cys-3, Cys-11, Cys-14, and Cys-87. Positions 212, 241, 262, and 307 each coordinate S-adenosyl-L-methionine. Residue Cys-334 is the Nucleophile of the active site.

The protein belongs to the class I-like SAM-binding methyltransferase superfamily. RNA M5U methyltransferase family. RlmC subfamily.

The catalysed reaction is uridine(747) in 23S rRNA + S-adenosyl-L-methionine = 5-methyluridine(747) in 23S rRNA + S-adenosyl-L-homocysteine + H(+). Functionally, catalyzes the formation of 5-methyl-uridine at position 747 (m5U747) in 23S rRNA. This is 23S rRNA (uracil(747)-C(5))-methyltransferase RlmC from Enterobacter sp. (strain 638).